The sequence spans 117 residues: Tyrosine-protein phosphatase 25 (117 aa).

The Tyrosine-protein phosphatase domain maps to 1–117; sequence WLMIIEQKCN…DLIGQSPIVV (117 aa). Position 85 (Asp85) interacts with substrate.

Belongs to the protein-tyrosine phosphatase family.

The catalysed reaction is O-phospho-L-tyrosyl-[protein] + H2O = L-tyrosyl-[protein] + phosphate. The chain is Tyrosine-protein phosphatase 25 (STY-25) from Styela plicata (Wrinkled sea squirt).